The chain runs to 475 residues: U3 small nucleolar RNA-interacting protein 2 (475 aa).

The tract at residues 1–75 is disordered; sequence MSATAAARKR…EEEEELEETA (75 aa). The Nuclear localization signal motif lies at 8–40; sequence RKRGKPASGAGAGAGAGKRRRKADSAGDRGKSK. The residue at position 10 (Arg-10) is an Omega-N-methylarginine. Lys-12 and Lys-25 each carry N6-acetyllysine. Phosphoserine is present on residues Ser-50, Ser-51, Ser-53, and Ser-57. A compositionally biased stretch (acidic residues) spans 65-74; sequence EEEEEELEET. Residue Lys-113 forms a Glycyl lysine isopeptide (Lys-Gly) (interchain with G-Cter in SUMO2) linkage. WD repeat units follow at residues 144-183, 197-236, 239-278, 281-320, 322-360, 374-413, and 419-460; these read GHQL…KLHV, GHSS…HLYT, GHRD…YVET, GHQD…QLVF, GHQG…PLAL, EQPF…RQLD, and PLVG…NSVC.

It belongs to the WD repeat RRP9 family. As to quaternary structure, interacts specifically with the U3 small nucleolar RNA (U3 snoRNA). Binds a sub-fragment of the U3 snoRNA surrounding the B/C motif (3UBC). This association with the U3BC RNA is dependent on the binding of a protein called 15.5K to the box B/C motif. The association of the protein with the U3BC RNA was found to be also dependent on a conserved RNA structure that flanks the box B/C motif. Part of the small subunit (SSU) processome, composed of more than 70 proteins and the RNA chaperone small nucleolar RNA (snoRNA) U3. In terms of processing, acetylation at Lys-12 and Lys-25 by KAT2B/PCAF under stress impairs pre-rRNA processing. Deacetylation by SIRT7 enhances RRP9-binding to U3 snoRNA, which is a prerequisite for pre-rRNA processing.

Its subcellular location is the nucleus. It localises to the nucleolus. Its function is as follows. Component of a nucleolar small nuclear ribonucleoprotein particle (snoRNP) thought to participate in the processing and modification of pre-ribosomal RNA (pre-rRNA). Part of the small subunit (SSU) processome, first precursor of the small eukaryotic ribosomal subunit. During the assembly of the SSU processome in the nucleolus, many ribosome biogenesis factors, an RNA chaperone and ribosomal proteins associate with the nascent pre-rRNA and work in concert to generate RNA folding, modifications, rearrangements and cleavage as well as targeted degradation of pre-ribosomal RNA by the RNA exosome. The sequence is that of U3 small nucleolar RNA-interacting protein 2 from Homo sapiens (Human).